A 154-amino-acid chain; its full sequence is Lymphocyte antigen 6K (154 aa).

A signal peptide spans 1–20; that stretch reads MAFLVALLVVLGLQLVQSNA. The 97-residue stretch at 21–117 folds into the UPAR/Ly6 domain; the sequence is LTCHVCEAQN…NGEGPPTDQL (97 aa). Gly123 carries the GPI-anchor amidated glycine lipid modification. Residues 124–154 constitute a propeptide, removed in mature form; the sequence is KASGRRHRYIELLLTGFMVLTANGLSALCLL.

Interacts with ADAM3 and TEX101. Strongly expressed in testes and weakly expressed in the epididymis, ovary, and uterus. Expressed in testicular germ cells (TGCs). Expressed in the testicular seminiferous tubules, in spermatocytes, spermatids, and testicular spermatozoa.

The protein localises to the secreted. It is found in the cytoplasm. The protein resides in the cell membrane. Its subcellular location is the cytoplasmic vesicle. It localises to the secretory vesicle. The protein localises to the acrosome. It is found in the membrane raft. Functionally, required for sperm migration into the oviduct and male fertility by controlling binding of sperm to zona pellucida. May play a role in cell growth. In Mus musculus (Mouse), this protein is Lymphocyte antigen 6K.